A 279-amino-acid chain; its full sequence is Diaminopimelate epimerase (279 aa).

The substrate site is built by Asn11 and Asn72. The active-site Proton donor is Cys81. Residues 82–83, Asn187, and 205–206 contribute to the substrate site; these read GN and ER. Cys215 serves as the catalytic Proton acceptor. A substrate-binding site is contributed by 216–217; that stretch reads GT.

The protein belongs to the diaminopimelate epimerase family. As to quaternary structure, homodimer.

The protein localises to the cytoplasm. The enzyme catalyses (2S,6S)-2,6-diaminopimelate = meso-2,6-diaminopimelate. It functions in the pathway amino-acid biosynthesis; L-lysine biosynthesis via DAP pathway; DL-2,6-diaminopimelate from LL-2,6-diaminopimelate: step 1/1. Functionally, catalyzes the stereoinversion of LL-2,6-diaminopimelate (L,L-DAP) to meso-diaminopimelate (meso-DAP), a precursor of L-lysine and an essential component of the bacterial peptidoglycan. This chain is Diaminopimelate epimerase, found in Aquifex aeolicus (strain VF5).